The chain runs to 206 residues: Large ribosomal subunit protein uL4 (206 aa).

A disordered region spans residues 44–80 (KRAGTHSVKTRSTISGGGAKPWRQKGTGRARSGSNRS).

This sequence belongs to the universal ribosomal protein uL4 family. Part of the 50S ribosomal subunit.

Its function is as follows. One of the primary rRNA binding proteins, this protein initially binds near the 5'-end of the 23S rRNA. It is important during the early stages of 50S assembly. It makes multiple contacts with different domains of the 23S rRNA in the assembled 50S subunit and ribosome. Functionally, forms part of the polypeptide exit tunnel. In Oleidesulfovibrio alaskensis (strain ATCC BAA-1058 / DSM 17464 / G20) (Desulfovibrio alaskensis), this protein is Large ribosomal subunit protein uL4.